The chain runs to 348 residues: Mannonate dehydratase (348 aa).

It belongs to the mannonate dehydratase family. It depends on Fe(2+) as a cofactor. Mn(2+) serves as cofactor.

The catalysed reaction is D-mannonate = 2-dehydro-3-deoxy-D-gluconate + H2O. The protein operates within carbohydrate metabolism; pentose and glucuronate interconversion. Its function is as follows. Catalyzes the dehydration of D-mannonate. The chain is Mannonate dehydratase from Streptococcus agalactiae serotype V (strain ATCC BAA-611 / 2603 V/R).